Consider the following 381-residue polypeptide: NF-kappa-B inhibitor-like protein 1 (381 aa).

The disordered stretch occupies residues 1–34 (MSNPSPQAPEEEASTSVCRPQSCSMASASRRHRR). Positions 14 to 27 (STSVCRPQSCSMAS) are enriched in polar residues. 2 ANK repeats span residues 64–93 (AGQP…ADPA) and 97–134 (RHGD…IKNK). Disordered stretches follow at residues 132–167 (KNKD…REWR) and 186–298 (EDDA…WRFG). Position 151 is a phosphoserine (S151). Positions 151–160 (SAEEEEDEEV) are enriched in acidic residues. Basic and acidic residues-rich tracts occupy residues 205 to 218 (RLAR…RQQL) and 237 to 290 (RQHE…RGAE).

In terms of assembly, interacts with CACTIN (via N-terminal domain); the interaction occurs in a pro-inflammatory-independent manner. In terms of tissue distribution, high expression found in heart muscle, liver, kidney and skin. Not detected in spleen, lung and brain.

It is found in the nucleus. In terms of biological role, involved in the regulation of innate immune response. Acts as negative regulator of Toll-like receptor and interferon-regulatory factor (IRF) signaling pathways. Contributes to the negative regulation of transcriptional activation of NF-kappa-B target genes in response to endogenous pro-inflammatory stimuli. The chain is NF-kappa-B inhibitor-like protein 1 (Nfkbil1) from Mus musculus (Mouse).